A 243-amino-acid chain; its full sequence is Adapter protein MecA (243 aa).

Residues 119–140 (NQVEDGQGIAHNPTKDTNDLDP) form a disordered region.

It belongs to the MecA family. Homodimer.

Its function is as follows. Enables the recognition and targeting of unfolded and aggregated proteins to the ClpC protease or to other proteins involved in proteolysis. This is Adapter protein MecA from Lactiplantibacillus plantarum (strain ATCC BAA-793 / NCIMB 8826 / WCFS1) (Lactobacillus plantarum).